Consider the following 452-residue polypeptide: Tubulin alpha-6 chain (452 aa).

Residues Q11, E69, S138, G142, T143, T177, N204, and N226 each coordinate GTP. Residue E69 coordinates Mg(2+). E252 is a catalytic residue.

Belongs to the tubulin family. In terms of assembly, dimer of alpha and beta chains. A typical microtubule is a hollow water-filled tube with an outer diameter of 25 nm and an inner diameter of 15 nM. Alpha-beta heterodimers associate head-to-tail to form protofilaments running lengthwise along the microtubule wall with the beta-tubulin subunit facing the microtubule plus end conferring a structural polarity. Microtubules usually have 13 protofilaments but different protofilament numbers can be found in some organisms and specialized cells. Mg(2+) serves as cofactor.

The protein localises to the cytoplasm. Its subcellular location is the cytoskeleton. It is found in the spindle. The enzyme catalyses GTP + H2O = GDP + phosphate + H(+). Its function is as follows. Tubulin is the major constituent of microtubules, a cylinder consisting of laterally associated linear protofilaments composed of alpha- and beta-tubulin heterodimers. Microtubules grow by the addition of GTP-tubulin dimers to the microtubule end, where a stabilizing cap forms. Below the cap, tubulin dimers are in GDP-bound state, owing to GTPase activity of alpha-tubulin. In Naegleria pringsheimi (Amoeba), this protein is Tubulin alpha-6 chain (TUBA6).